A 185-amino-acid polypeptide reads, in one-letter code: PXMP2/4 family protein 4 (185 aa).

Transmembrane regions (helical) follow at residues 63–83, 100–120, and 141–161; these read MAVF…KYLD, IDQV…MGIL, and VSDC…ISSI.

Belongs to the peroxisomal membrane protein PXMP2/4 family.

Its subcellular location is the membrane. In Dictyostelium discoideum (Social amoeba), this protein is PXMP2/4 family protein 4.